Reading from the N-terminus, the 499-residue chain is Aspartyl/glutamyl-tRNA(Asn/Gln) amidotransferase subunit B (499 aa).

Belongs to the GatB/GatE family. GatB subfamily. As to quaternary structure, heterotrimer of A, B and C subunits.

It carries out the reaction L-glutamyl-tRNA(Gln) + L-glutamine + ATP + H2O = L-glutaminyl-tRNA(Gln) + L-glutamate + ADP + phosphate + H(+). It catalyses the reaction L-aspartyl-tRNA(Asn) + L-glutamine + ATP + H2O = L-asparaginyl-tRNA(Asn) + L-glutamate + ADP + phosphate + 2 H(+). In terms of biological role, allows the formation of correctly charged Asn-tRNA(Asn) or Gln-tRNA(Gln) through the transamidation of misacylated Asp-tRNA(Asn) or Glu-tRNA(Gln) in organisms which lack either or both of asparaginyl-tRNA or glutaminyl-tRNA synthetases. The reaction takes place in the presence of glutamine and ATP through an activated phospho-Asp-tRNA(Asn) or phospho-Glu-tRNA(Gln). This chain is Aspartyl/glutamyl-tRNA(Asn/Gln) amidotransferase subunit B, found in Mesorhizobium japonicum (strain LMG 29417 / CECT 9101 / MAFF 303099) (Mesorhizobium loti (strain MAFF 303099)).